Consider the following 333-residue polypeptide: Small ribosomal subunit protein uS2 (333 aa).

The protein belongs to the universal ribosomal protein uS2 family.

The chain is Small ribosomal subunit protein uS2 from Azorhizobium caulinodans (strain ATCC 43989 / DSM 5975 / JCM 20966 / LMG 6465 / NBRC 14845 / NCIMB 13405 / ORS 571).